Consider the following 305-residue polypeptide: Transmembrane epididymal protein 1 (305 aa).

A helical transmembrane segment spans residues 4 to 24 (FIGHISPGLFLVFYGLYQAII). Asn32 carries an N-linked (GlcNAc...) asparagine glycan. 6 helical membrane-spanning segments follow: residues 51 to 71 (LWQI…LIVY), 100 to 120 (LTMF…RSVL), 124 to 144 (LVLL…LLLV), 159 to 179 (SLLI…LWAP), 187 to 207 (IETF…FILF), and 223 to 243 (IMLV…CMLG). A disordered region spans residues 285 to 305 (EQQDRDDQAPLLSKSSPCDRA).

The protein belongs to the TMEM45 family.

The protein resides in the membrane. The sequence is that of Transmembrane epididymal protein 1 (Teddm1) from Rattus norvegicus (Rat).